The following is a 150-amino-acid chain: Small heat shock protein HspE (150 aa).

One can recognise a sHSP domain in the interval 27–137 (VDNGDTYPPY…KPRQIAIDVA (111 aa)).

Belongs to the small heat shock protein (HSP20) family.

This is Small heat shock protein HspE (hspE) from Bradyrhizobium diazoefficiens (strain JCM 10833 / BCRC 13528 / IAM 13628 / NBRC 14792 / USDA 110).